Reading from the N-terminus, the 382-residue chain is Chaperone protein DnaJ (382 aa).

One can recognise a J domain in the interval 4–69; sequence DYYEVLGVSR…DKRRRYDQFG (66 aa). Residues 138-219 form a CR-type zinc finger; sequence GVEKTIKIKK…CYGEGIKQGE (82 aa). 8 residues coordinate Zn(2+): Cys-151, Cys-154, Cys-167, Cys-170, Cys-193, Cys-196, Cys-207, and Cys-210. 4 CXXCXGXG motif repeats span residues 151–158, 167–174, 193–200, and 207–214; these read CKECNGSG, CPTCHGAG, CPTCGGEG, and CPSCYGEG.

This sequence belongs to the DnaJ family. As to quaternary structure, homodimer. Zn(2+) serves as cofactor.

It is found in the cytoplasm. Its function is as follows. Participates actively in the response to hyperosmotic and heat shock by preventing the aggregation of stress-denatured proteins and by disaggregating proteins, also in an autonomous, DnaK-independent fashion. Unfolded proteins bind initially to DnaJ; upon interaction with the DnaJ-bound protein, DnaK hydrolyzes its bound ATP, resulting in the formation of a stable complex. GrpE releases ADP from DnaK; ATP binding to DnaK triggers the release of the substrate protein, thus completing the reaction cycle. Several rounds of ATP-dependent interactions between DnaJ, DnaK and GrpE are required for fully efficient folding. Also involved, together with DnaK and GrpE, in the DNA replication of plasmids through activation of initiation proteins. In Chlorobium luteolum (strain DSM 273 / BCRC 81028 / 2530) (Pelodictyon luteolum), this protein is Chaperone protein DnaJ.